Here is a 75-residue protein sequence, read N- to C-terminus: Metallothionein-like protein 1 (75 aa).

Belongs to the metallothionein superfamily. Type 15 family.

Its function is as follows. Metallothioneins have a high content of cysteine residues that bind various heavy metals. The sequence is that of Metallothionein-like protein 1 from Cicer arietinum (Chickpea).